The following is a 382-amino-acid chain: PqqA peptide cyclase (382 aa).

Residues 8 to 223 (VKPPLWLLAE…VHRYREKMAA (216 aa)) enclose the Radical SAM core domain. Residues C22, C26, and C29 each coordinate [4Fe-4S] cluster.

This sequence belongs to the radical SAM superfamily. PqqE family. As to quaternary structure, interacts with PqqD. The interaction is necessary for activity of PqqE. [4Fe-4S] cluster serves as cofactor.

The catalysed reaction is [PQQ precursor protein] + S-adenosyl-L-methionine = E-Y cross-linked-[PQQ precursor protein] + 5'-deoxyadenosine + L-methionine + H(+). The protein operates within cofactor biosynthesis; pyrroloquinoline quinone biosynthesis. In terms of biological role, catalyzes the cross-linking of a glutamate residue and a tyrosine residue in the PqqA protein as part of the biosynthesis of pyrroloquinoline quinone (PQQ). This chain is PqqA peptide cyclase, found in Erwinia tasmaniensis (strain DSM 17950 / CFBP 7177 / CIP 109463 / NCPPB 4357 / Et1/99).